The primary structure comprises 269 residues: Meiotically up-regulated gene 43 protein (269 aa).

The protein resides in the mitochondrion. Has a role in meiosis. The polypeptide is Meiotically up-regulated gene 43 protein (mug43) (Schizosaccharomyces pombe (strain 972 / ATCC 24843) (Fission yeast)).